We begin with the raw amino-acid sequence, 711 residues long: Methionine--tRNA ligase (711 aa).

The 'HIGH' region signature appears at 15-25; it reads PYTNGPIHIGH. Zn(2+) is bound by residues C147, C150, C160, and C163. Residues 336–340 carry the 'KMSKS' region motif; that stretch reads KLSTS. Position 339 (T339) interacts with ATP. One can recognise a tRNA-binding domain in the interval 610-711; the sequence is DFAKMDIRIG…ADAPNGATVN (102 aa).

The protein belongs to the class-I aminoacyl-tRNA synthetase family. MetG type 1 subfamily. In terms of assembly, homodimer. The cofactor is Zn(2+).

The protein localises to the cytoplasm. It catalyses the reaction tRNA(Met) + L-methionine + ATP = L-methionyl-tRNA(Met) + AMP + diphosphate. In terms of biological role, is required not only for elongation of protein synthesis but also for the initiation of all mRNA translation through initiator tRNA(fMet) aminoacylation. The protein is Methionine--tRNA ligase of Flavobacterium johnsoniae (strain ATCC 17061 / DSM 2064 / JCM 8514 / BCRC 14874 / CCUG 350202 / NBRC 14942 / NCIMB 11054 / UW101) (Cytophaga johnsonae).